Reading from the N-terminus, the 156-residue chain is Putative pre-16S rRNA nuclease (156 aa).

This sequence belongs to the YqgF nuclease family.

The protein resides in the cytoplasm. Its function is as follows. Could be a nuclease involved in processing of the 5'-end of pre-16S rRNA. The chain is Putative pre-16S rRNA nuclease from Ehrlichia chaffeensis (strain ATCC CRL-10679 / Arkansas).